Reading from the N-terminus, the 248-residue chain is Segregation and condensation protein A (248 aa).

The protein belongs to the ScpA family. In terms of assembly, component of a cohesin-like complex composed of ScpA, ScpB and the Smc homodimer, in which ScpA and ScpB bind to the head domain of Smc. The presence of the three proteins is required for the association of the complex with DNA.

It is found in the cytoplasm. Its function is as follows. Participates in chromosomal partition during cell division. May act via the formation of a condensin-like complex containing Smc and ScpB that pull DNA away from mid-cell into both cell halves. The chain is Segregation and condensation protein A from Clostridium perfringens (strain SM101 / Type A).